A 134-amino-acid chain; its full sequence is Iron-sulfur cluster insertion protein ErpA (134 aa).

Iron-sulfur cluster contacts are provided by Cys-47, Cys-126, and Cys-128.

This sequence belongs to the HesB/IscA family. In terms of assembly, homodimer. Requires iron-sulfur cluster as cofactor.

Its function is as follows. Required for insertion of 4Fe-4S clusters for at least IspG. In Coxiella burnetii (strain RSA 331 / Henzerling II), this protein is Iron-sulfur cluster insertion protein ErpA.